A 232-amino-acid chain; its full sequence is Ribonuclease 3 (232 aa).

Residues 2–135 (IKALEDDLSQ…FIGALYLDQG (134 aa)) enclose the RNase III domain. Residue Glu48 coordinates Mg(2+). The active site involves Asp52. Positions 121 and 124 each coordinate Mg(2+). The active site involves Glu124. Positions 161 to 230 (DHKSELQELL…ANQALQLLRR (70 aa)) constitute a DRBM domain.

The protein belongs to the ribonuclease III family. Homodimer. Mg(2+) serves as cofactor.

The protein localises to the cytoplasm. It catalyses the reaction Endonucleolytic cleavage to 5'-phosphomonoester.. In terms of biological role, digests double-stranded RNA. Involved in the processing of primary rRNA transcript to yield the immediate precursors to the large and small rRNAs (23S and 16S). Processes some mRNAs, and tRNAs when they are encoded in the rRNA operon. Processes pre-crRNA and tracrRNA of type II CRISPR loci if present in the organism. This Pediococcus pentosaceus (strain ATCC 25745 / CCUG 21536 / LMG 10740 / 183-1w) protein is Ribonuclease 3.